The chain runs to 345 residues: MAAPASDSGGSQQSPSSSPGSREGAGVAAKGAPDCGDAGARDAAETVSGLPPLEDYECKICYNYFDADRRAPKLLACLHTFCQECLSQLQLRAAAAAAAAAAPERPPRPPPWLCPPGAIACPVCRHRTPLPDSRVHGLPNNTKLAEAFPLALRAAHDPLPQDRLPPLPARLPAPAAAPPPTPAPPPPPSPAPPQPPPPPPAEDAAPGPRARPGLRAPGAYDSCQNCKRAALTAGCVCVVFSFLSMVVLLFTGLIFVNHYGGGGTPGGGAPPGEAPATGSPSPSPVGPICLSVASILALFSVVVTWVICWLKYRPEGAAAGSTGGSGGGGGPRARAAAGGARRSDT.

Residues methionine 1–serine 21 show a composition bias toward low complexity. The interval methionine 1–alanine 43 is disordered. Residues cysteine 58 to arginine 125 form an RING-type zinc finger. A disordered region spans residues leucine 159–glycine 213. Residues arginine 163–alanine 201 show a composition bias toward pro residues. Residues glutamate 202–glycine 213 are compositionally biased toward low complexity. 2 consecutive transmembrane segments (helical) span residues valine 236–valine 256 and leucine 290–leucine 310. The tract at residues alanine 319–threonine 345 is disordered. Residues serine 321 to proline 331 show a composition bias toward gly residues. A compositionally biased stretch (low complexity) spans arginine 332–threonine 345.

It is found in the membrane. This is RING finger protein 228 from Homo sapiens (Human).